A 294-amino-acid polypeptide reads, in one-letter code: 33 kDa chaperonin (294 aa).

Intrachain disulfides connect cysteine 238-cysteine 240 and cysteine 271-cysteine 274.

The protein belongs to the HSP33 family. Under oxidizing conditions two disulfide bonds are formed involving the reactive cysteines. Under reducing conditions zinc is bound to the reactive cysteines and the protein is inactive.

It localises to the cytoplasm. Functionally, redox regulated molecular chaperone. Protects both thermally unfolding and oxidatively damaged proteins from irreversible aggregation. Plays an important role in the bacterial defense system toward oxidative stress. The sequence is that of 33 kDa chaperonin from Thermoanaerobacter pseudethanolicus (strain ATCC 33223 / 39E) (Clostridium thermohydrosulfuricum).